We begin with the raw amino-acid sequence, 38 residues long: Large ribosomal subunit protein bL36 (38 aa).

The protein belongs to the bacterial ribosomal protein bL36 family.

In Anaeromyxobacter dehalogenans (strain 2CP-1 / ATCC BAA-258), this protein is Large ribosomal subunit protein bL36.